Reading from the N-terminus, the 555-residue chain is NAD-dependent protein deacetylase sirtuin-1 (555 aa).

Residues 39–46 (PPKRKKRK) carry the Nuclear localization signal motif. The Deacetylase sirtuin-type domain maps to 44–304 (KRKDINTIED…NELCHRLGGE (261 aa)). Position 46 is an N6-acetyllysine (Lys46). Residues 64 to 67 (IIVL) form a required for interaction with the sumoylated form of CCAR2 region. NAD(+) contacts are provided by residues 69-88 (GAGV…DGIY) and 153-156 (QNID). Residue His171 is the Proton acceptor of the active site. Zn(2+) is bound by residues Cys179 and Cys182. N6-acetyllysine is present on Lys185. 2 residues coordinate Zn(2+): Cys203 and Cys206. 2 positions are modified to S-nitrosocysteine: Cys203 and Cys206. Residue Lys238 is modified to N6-acetyllysine. The short motif at 241 to 247 (VDLLIVI) is the Nuclear export signal element. Residues 248–250 (GSS), 273–275 (NRE), and Cys290 each bind NAD(+). Lys321 is subject to N6-acetyllysine. The tract at residues 335-354 (LPPTPLHISEDSSSPERTVP) is disordered. A Phosphothreonine modification is found at Thr338. Ser343 is subject to Phosphoserine. Over residues 345-354 (DSSSPERTVP) the composition is skewed to polar residues. Thr352 bears the Phosphothreonine mark. Residue Lys417 is modified to N6-acetyllysine. A phosphoserine mark is found at Ser466 and Ser468. A disordered region spans residues 469-529 (EDDALSSSSC…GGSGADGGDQ (61 aa)). The segment covering 473 to 493 (LSSSSCGSNSDSGTCQSPSLE) has biased composition (low complexity). Over residues 494 to 514 (EPLEDESEIEEFYNGLEDDAD) the composition is skewed to acidic residues. Phosphoserine is present on Ser552.

The protein belongs to the sirtuin family. Class I subfamily. As to quaternary structure, interacts with XBP1 isoform 2. Found in a complex with PCAF and MYOD1. Interacts with FOXO1; the interaction deacetylates FOXO1, resulting in its nuclear retention and promotion of its transcriptional activity Component of the eNoSC complex, composed of SIRT1, SUV39H1 and RRP8. Interacts with HES1, HEY2 and PML. Interacts with RPS19BP1/AROS. Interacts with CCAR2 (via N-terminus); the interaction disrupts the interaction between SIRT1 and p53/TP53. Interacts with SETD7; the interaction induces the dissociation of SIRT1 from p53/TP53 and increases p53/TP53 activity. Interacts with MYCN, NR1I2, CREBZF, TSC2, TLE1, FOS, JUN, NR0B2, PPARG, NCOR, IRS1, IRS2 and NMNAT1. Interacts with HNF1A; the interaction occurs under nutrient restriction. Interacts with SUZ12; the interaction mediates the association with the PRC4 histone methylation complex which is specific as an association with PCR2 and PCR3 complex variants is not found. Interacts with HIV-1 tat. Interacts with BCL6; leads to a epigenetic repression of specific target genes. Interacts with CLOCK, BMAL1 and PER2. Interacts with PPARA; the interaction seems to be modulated by NAD(+) levels. Interacts with NR1H3 and this interaction is inhibited in the presence of CCAR2. Interacts with CHEK2. Interacts with p53/TP53. Exhibits a preferential interaction with sumoylated CCAR2 over its unmodified form. Interacts with PACS2. Interacts with SIRT7. Interacts with PUS7. Interacts with TULP3. Interacts with MORN3; the interaction enhances the ubiquitination of p53/TP53. Zn(2+) is required as a cofactor. In terms of processing, methylated on multiple lysine residues; methylation is enhanced after DNA damage and is dispensable for deacetylase activity toward p53/TP53. Post-translationally, phosphorylated. Phosphorylated by STK4/MST1, resulting in inhibition of SIRT1-mediated p53/TP53 deacetylation. Phosphorylation by MAPK8/JNK1 at Thr-338 leads to increased nuclear localization and enzymatic activity. Phosphorylation at Thr-338 by DYRK1A and DYRK3 activates deacetylase activity and promotes cell survival. Phosphorylated by CaMK2, leading to increased p53/TP53 and NF-kappa-B p65/RELA deacetylation activity. S-nitrosylated by GAPDH, leading to inhibit the NAD-dependent protein deacetylase activity. In terms of processing, acetylated at various Lys residues. Deacetylated via an autocatalytic mechanism. Autodeacetylation at Lys-46 promotes its protein deacetylase activity. Post-translationally, ubiquitinated; leading to degradation. Deubiquitinated by USP22; leading to stabilization.

The protein localises to the nucleus. Its subcellular location is the PML body. It is found in the cytoplasm. The enzyme catalyses N(6)-acetyl-L-lysyl-[protein] + NAD(+) + H2O = 2''-O-acetyl-ADP-D-ribose + nicotinamide + L-lysyl-[protein]. It carries out the reaction N(6)-propanoyl-L-lysyl-[protein] + NAD(+) + H2O = 3''-O-propanoyl-ADP-D-ribose + nicotinamide + L-lysyl-[protein]. It catalyses the reaction N(6)-(2E)-butenoyl-L-lysyl-[protein] + NAD(+) + H2O = 2''-O-(2E)-but-2-enoyl-ADP-D-ribose + nicotinamide + L-lysyl-[protein]. With respect to regulation, inhibited by nicotinamide. Activated by resveratrol (3,5,4'-trihydroxy-trans-stilbene), butein (3,4,2',4'-tetrahydroxychalcone), piceatannol (3,5,3',4'-tetrahydroxy-trans-stilbene), Isoliquiritigenin (4,2',4'-trihydroxychalcone), fisetin (3,7,3',4'-tetrahydroxyflavone) and quercetin (3,5,7,3',4'-pentahydroxyflavone). MAPK8/JNK1 and RPS19BP1/AROS act as positive regulators of deacetylation activity. Negatively regulated by CCAR2. Its function is as follows. NAD-dependent protein deacetylase that links transcriptional regulation directly to intracellular energetics and participates in the coordination of several separated cellular functions such as cell cycle, response to DNA damage, metabolism, apoptosis and autophagy. Can modulate chromatin function through deacetylation of histones and can promote alterations in the methylation of histones and DNA, leading to transcriptional repression. Deacetylates a broad range of transcription factors and coregulators, thereby regulating target gene expression positively and negatively. Serves as a sensor of the cytosolic ratio of NAD(+)/NADH which is altered by glucose deprivation and metabolic changes associated with caloric restriction. Is essential in skeletal muscle cell differentiation and in response to low nutrients mediates the inhibitory effect on skeletal myoblast differentiation which also involves 5'-AMP-activated protein kinase (AMPK) and nicotinamide phosphoribosyltransferase (NAMPT). Component of the eNoSC (energy-dependent nucleolar silencing) complex, a complex that mediates silencing of rDNA in response to intracellular energy status and acts by recruiting histone-modifying enzymes. The eNoSC complex is able to sense the energy status of cell: upon glucose starvation, elevation of NAD(+)/NADP(+) ratio activates SIRT1, leading to histone H3 deacetylation followed by dimethylation of H3 at 'Lys-9' (H3K9me2) by SUV39H1 and the formation of silent chromatin in the rDNA locus. Deacetylates 'Lys-266' of SUV39H1, leading to its activation. Inhibits skeletal muscle differentiation by deacetylating PCAF and MYOD1. Deacetylates H2A and 'Lys-26' of H1-4. Deacetylates 'Lys-16' of histone H4 (in vitro). Involved in NR0B2/SHP corepression function through chromatin remodeling: Recruited to LRH1 target gene promoters by NR0B2/SHP thereby stimulating histone H3 and H4 deacetylation leading to transcriptional repression. Proposed to contribute to genomic integrity via positive regulation of telomere length; however, reports on localization to pericentromeric heterochromatin are conflicting. Proposed to play a role in constitutive heterochromatin (CH) formation and/or maintenance through regulation of the available pool of nuclear SUV39H1. Upon oxidative/metabolic stress decreases SUV39H1 degradation by inhibiting SUV39H1 polyubiquitination by MDM2. This increase in SUV39H1 levels enhances SUV39H1 turnover in CH, which in turn seems to accelerate renewal of the heterochromatin which correlates with greater genomic integrity during stress response. Deacetylates 'Lys-382' of p53/TP53 and impairs its ability to induce transcription-dependent proapoptotic program and modulate cell senescence. Deacetylates TAF1B and thereby represses rDNA transcription by the RNA polymerase I. Deacetylates MYC, promotes the association of MYC with MAX and decreases MYC stability leading to compromised transformational capability. Deacetylates FOXO3 in response to oxidative stress thereby increasing its ability to induce cell cycle arrest and resistance to oxidative stress but inhibiting FOXO3-mediated induction of apoptosis transcriptional activity; also leading to FOXO3 ubiquitination and protesomal degradation. Appears to have a similar effect on MLLT7/FOXO4 in regulation of transcriptional activity and apoptosis. Deacetylates DNMT1; thereby impairs DNMT1 methyltransferase-independent transcription repressor activity, modulates DNMT1 cell cycle regulatory function and DNMT1-mediated gene silencing. Deacetylates RELA/NF-kappa-B p65 thereby inhibiting its transactivating potential and augments apoptosis in response to TNF-alpha. Deacetylates HIF1A, KAT5/TIP60, RB1 and HIC1. Deacetylates FOXO1 resulting in its nuclear retention and enhancement of its transcriptional activity leading to increased gluconeogenesis in liver. Inhibits E2F1 transcriptional activity and apoptotic function, possibly by deacetylation. Involved in HES1- and HEY2-mediated transcriptional repression. In cooperation with MYCN seems to be involved in transcriptional repression of DUSP6/MAPK3 leading to MYCN stabilization by phosphorylation at 'Ser-62'. Deacetylates MEF2D. Required for antagonist-mediated transcription suppression of AR-dependent genes which may be linked to local deacetylation of histone H3. Represses HNF1A-mediated transcription. Required for the repression of ESRRG by CREBZF. Deacetylates NR1H3 AND NR1H2 and deacetylation of NR1H3 at 'Lys-434' positively regulates transcription of NR1H3:RXR target genes, promotes NR1H3 proteasomal degradation and results in cholesterol efflux; a promoter clearing mechanism after reach round of transcription is proposed. Involved in lipid metabolism: deacetylates LPIN1, thereby inhibiting diacylglycerol synthesis. Implicated in regulation of adipogenesis and fat mobilization in white adipocytes by repression of PPARG which probably involves association with NCOR1 and SMRT/NCOR2. Deacetylates p300/EP300 and PRMT1. Deacetylates ACSS2 leading to its activation, and HMGCS1 deacetylation. Involved in liver and muscle metabolism. Through deacetylation and activation of PPARGC1A is required to activate fatty acid oxidation in skeletal muscle under low-glucose conditions and is involved in glucose homeostasis. Involved in regulation of PPARA and fatty acid beta-oxidation in liver. Involved in positive regulation of insulin secretion in pancreatic beta cells in response to glucose; the function seems to imply transcriptional repression of UCP2. Proposed to deacetylate IRS2 thereby facilitating its insulin-induced tyrosine phosphorylation. Deacetylates SREBF1 isoform SREBP-1C thereby decreasing its stability and transactivation in lipogenic gene expression. Involved in DNA damage response by repressing genes which are involved in DNA repair, such as XPC and TP73, deacetylating XRCC6/Ku70, and facilitating recruitment of additional factors to sites of damaged DNA, such as SIRT1-deacetylated NBN can recruit ATM to initiate DNA repair and SIRT1-deacetylated XPA interacts with RPA2. Also involved in DNA repair of DNA double-strand breaks by homologous recombination and specifically single-strand annealing independently of XRCC6/Ku70 and NBN. Promotes DNA double-strand breaks by mediating deacetylation of SIRT6. Transcriptional suppression of XPC probably involves an E2F4:RBL2 suppressor complex and protein kinase B (AKT) signaling. Transcriptional suppression of TP73 probably involves E2F4 and PCAF. Deacetylates WRN thereby regulating its helicase and exonuclease activities and regulates WRN nuclear translocation in response to DNA damage. Deacetylates APEX1 at 'Lys-6' and 'Lys-7' and stimulates cellular AP endonuclease activity by promoting the association of APEX1 to XRCC1. Catalyzes deacetylation of ERCC4/XPF, thereby impairing interaction with ERCC1 and nucleotide excision repair (NER). Increases p53/TP53-mediated transcription-independent apoptosis by blocking nuclear translocation of cytoplasmic p53/TP53 and probably redirecting it to mitochondria. Deacetylates XRCC6/Ku70 at 'Lys-539' and 'Lys-542' causing it to sequester BAX away from mitochondria thereby inhibiting stress-induced apoptosis. Is involved in autophagy, presumably by deacetylating ATG5, ATG7 and MAP1LC3B/ATG8. Deacetylates AKT1 which leads to enhanced binding of AKT1 and PDK1 to PIP3 and promotes their activation. Proposed to play role in regulation of STK11/LBK1-dependent AMPK signaling pathways implicated in cellular senescence which seems to involve the regulation of the acetylation status of STK11/LBK1. Can deacetylate STK11/LBK1 and thereby increase its activity, cytoplasmic localization and association with STRAD; however, the relevance of such activity in normal cells is unclear. In endothelial cells is shown to inhibit STK11/LBK1 activity and to promote its degradation. Deacetylates SMAD7 at 'Lys-64' and 'Lys-70' thereby promoting its degradation. Deacetylates CIITA and augments its MHC class II transactivation and contributes to its stability. Deacetylates MECOM/EVI1. Deacetylates PML at 'Lys-487' and this deacetylation promotes PML control of PER2 nuclear localization. During the neurogenic transition, represses selective NOTCH1-target genes through histone deacetylation in a BCL6-dependent manner and leading to neuronal differentiation. Regulates the circadian expression of several core clock genes, including BMAL1, RORC, PER2 and CRY1 and plays a critical role in maintaining a controlled rhythmicity in histone acetylation, thereby contributing to circadian chromatin remodeling. Deacetylates BMAL1 and histones at the circadian gene promoters in order to facilitate repression by inhibitory components of the circadian oscillator. Deacetylates PER2, facilitating its ubiquitination and degradation by the proteasome. Protects cardiomyocytes against palmitate-induced apoptosis. Deacetylates XBP1 isoform 2; deacetylation decreases protein stability of XBP1 isoform 2 and inhibits its transcriptional activity. Deacetylates PCK1 and directs its activity toward phosphoenolpyruvate production promoting gluconeogenesis. Involved in the CCAR2-mediated regulation of PCK1 and NR1D1. Deacetylates CTNB1 at 'Lys-49'. In POMC (pro-opiomelanocortin) neurons, required for leptin-induced activation of PI3K signaling. In addition to protein deacetylase activity, also acts as a protein-lysine deacylase by mediating protein depropionylation and decrotonylation. Mediates depropionylation of Osterix (SP7). Catalyzes decrotonylation of histones; it however does not represent a major histone decrotonylase. Deacetylates SOX9; promoting SOX9 nuclear localization and transactivation activity. Involved in the regulation of centrosome duplication. Deacetylates CENATAC in G1 phase, allowing for SASS6 accumulation on the centrosome and subsequent procentriole assembly. Deacetylates NDC80/HEC1. This is NAD-dependent protein deacetylase sirtuin-1 from Rattus norvegicus (Rat).